Reading from the N-terminus, the 424-residue chain is 3-isopropylmalate dehydratase large subunit 1 (424 aa).

Residues Cys-303, Cys-363, and Cys-366 each coordinate [4Fe-4S] cluster.

It belongs to the aconitase/IPM isomerase family. LeuC type 2 subfamily. In terms of assembly, heterodimer of LeuC and LeuD. Requires [4Fe-4S] cluster as cofactor.

The enzyme catalyses (2R,3S)-3-isopropylmalate = (2S)-2-isopropylmalate. It participates in amino-acid biosynthesis; L-leucine biosynthesis; L-leucine from 3-methyl-2-oxobutanoate: step 2/4. Its function is as follows. Catalyzes the isomerization between 2-isopropylmalate and 3-isopropylmalate, via the formation of 2-isopropylmaleate. This is 3-isopropylmalate dehydratase large subunit 1 from Pyrococcus furiosus (strain ATCC 43587 / DSM 3638 / JCM 8422 / Vc1).